Consider the following 150-residue polypeptide: 3-dehydroquinate dehydratase (150 aa).

Tyrosine 26 acts as the Proton acceptor in catalysis. Positions 77, 83, and 90 each coordinate substrate. Histidine 103 acts as the Proton donor in catalysis. Substrate-binding positions include 104–105 and arginine 114; that span reads LS.

The protein belongs to the type-II 3-dehydroquinase family. In terms of assembly, homododecamer.

It carries out the reaction 3-dehydroquinate = 3-dehydroshikimate + H2O. Its pathway is metabolic intermediate biosynthesis; chorismate biosynthesis; chorismate from D-erythrose 4-phosphate and phosphoenolpyruvate: step 3/7. Its function is as follows. Catalyzes a trans-dehydration via an enolate intermediate. The chain is 3-dehydroquinate dehydratase from Enterobacter sp. (strain 638).